We begin with the raw amino-acid sequence, 435 residues long: Glutamate-1-semialdehyde 2,1-aminomutase (435 aa).

Lys266 bears the N6-(pyridoxal phosphate)lysine mark.

This sequence belongs to the class-III pyridoxal-phosphate-dependent aminotransferase family. HemL subfamily. Homodimer. It depends on pyridoxal 5'-phosphate as a cofactor.

The protein localises to the cytoplasm. The enzyme catalyses (S)-4-amino-5-oxopentanoate = 5-aminolevulinate. It functions in the pathway porphyrin-containing compound metabolism; protoporphyrin-IX biosynthesis; 5-aminolevulinate from L-glutamyl-tRNA(Glu): step 2/2. This Helicobacter hepaticus (strain ATCC 51449 / 3B1) protein is Glutamate-1-semialdehyde 2,1-aminomutase.